A 470-amino-acid chain; its full sequence is Nuclear receptor ROR-beta (470 aa).

The nuclear receptor DNA-binding region spans 18–93; the sequence is VIPCKICGDK…LGMSRDAVKF (76 aa). 2 NR C4-type zinc fingers span residues 21–41 and 57–81; these read CKICGDKSSGIHYGVITCEGC and CPRQRNCLIDRTNRNRCQHCRLQKC. The segment covering 104-117 has biased composition (basic and acidic residues); sequence LYAEVQKHQQRLQE. Residues 104–127 are disordered; it reads LYAEVQKHQQRLQEQRQQQSGEAE. Residues 222 to 460 enclose the NR LBD domain; the sequence is EIDRIAQNII…TLFPPLYKEL (239 aa). The AF-2 motif lies at 456-461; the sequence is LYKELF.

It belongs to the nuclear hormone receptor family. NR1 subfamily. Monomer. Interacts with CRX. In terms of tissue distribution, isoform 2 expressed with circadian rhythm in eye and pineal gland. Isoform 1 expressed in retina cortex, thalamus, and hypothalamus.

Its subcellular location is the nucleus. The protein localises to the nucleoplasm. Functionally, nuclear receptor that binds DNA as a monomer to ROR response elements (RORE) containing a single core motif half-site 5'-AGGTCA-3' preceded by a short A-T-rich sequence. Considered to have intrinsic transcriptional activity, have some natural ligands such as all-trans retinoic acid (ATRA) and other retinoids which act as inverse agonists repressing the transcriptional activity. Required for normal postnatal development of rod and cone photoreceptor cells. Modulates rod photoreceptors differentiation at least by inducing the transcription factor NRL-mediated pathway. In cone photoreceptor cells, regulates transcription of OPN1SW. Involved in the regulation of the period length and stability of the circadian rhythm. May control cytoarchitectural patterning of neocortical neurons during development. May act in a dose-dependent manner to regulate barrel formation upon innervation of layer IV neurons by thalamocortical axons. May play a role in the suppression of osteoblastic differentiation through the inhibition of RUNX2 transcriptional activity. In terms of biological role, critical for hindlimb motor control and for the differentiation of amacrine and horizontal cells in the retina. Regulates the expression of PTF1A synergistically with FOXN4. This Rattus norvegicus (Rat) protein is Nuclear receptor ROR-beta (Rorb).